We begin with the raw amino-acid sequence, 436 residues long: uncharacterized protein (436 aa).

Residues 1-18 (MMKRFVALSMAIFSLSFA) form the signal peptide.

This is an uncharacterized protein from Aquifex aeolicus (strain VF5).